A 596-amino-acid chain; its full sequence is Transketolase-like protein 1 (596 aa).

Histidine 46 serves as a coordination point for substrate. Thiamine diphosphate is bound by residues serine 49 and 94–96 (GWL). Aspartate 126 is a binding site for Mg(2+). 2 residues coordinate thiamine diphosphate: glycine 127 and asparagine 156. Positions 156 and 158 each coordinate Mg(2+). Thiamine diphosphate-binding residues include lysine 218 and histidine 232. The substrate site is built by histidine 232, arginine 292, and serine 319. Glutamate 340 and phenylalanine 366 together coordinate thiamine diphosphate. Glutamate 340 acts as the Proton donor in catalysis. Substrate-binding residues include histidine 390 and aspartate 398. Glutamine 402 contacts thiamine diphosphate. Substrate is bound at residue arginine 448.

It belongs to the transketolase family. In terms of assembly, homodimer. Requires Mg(2+) as cofactor. Ca(2+) is required as a cofactor. The cofactor is Mn(2+). Co(2+) serves as cofactor. It depends on thiamine diphosphate as a cofactor.

Its subcellular location is the cytoplasm. The enzyme catalyses D-sedoheptulose 7-phosphate + D-glyceraldehyde 3-phosphate = aldehydo-D-ribose 5-phosphate + D-xylulose 5-phosphate. In terms of biological role, catalyzes the transfer of a two-carbon ketol group from a ketose donor to an aldose acceptor, via a covalent intermediate with the cofactor thiamine pyrophosphate. This is Transketolase-like protein 1 (TKTL1) from Macaca fascicularis (Crab-eating macaque).